We begin with the raw amino-acid sequence, 443 residues long: MDSLAALYKNHIVTLQERTRDVLTRFKLDALLIHSGELLNVFLDDHAYPFKVNPQFKAWVPVTQVPNCWLLVDGVNKPKLWFYLPVDYWHNVEPLPTTFWTEEVDVIALPKADGIGSQLPAARGNIAYIGPVPERALGLDIPADKINPKGVIDYLHYYRAYKTDYELSCMREAQKTAVNGHQAAHEAFLSGMSEFDINQAYLTATGHRDTDVPYGNIVALNEHASVLHYTKLDHRAPSEIRSFLLDAGAEYNGYAADLTRTWAANSDTDFAHLIKDVNDEQLALISTMKAGTSYVDYHIQFHQRIAKLLRKHQIVTDMSEEAMVENDLTGPFMPHGIGHPLGLQVHDVAGFMQDDTGTHLAAPSKYPYLRCTRVLEPRMVLTIEPGIYFIDSLLNPWREGQFSKHFNWQKIDALKPFGGIRIEDNVVVHENNIENMTRDQKLA.

Residues aspartate 246, aspartate 257, histidine 339, glutamate 384, and glutamate 423 each coordinate Mn(2+).

It belongs to the peptidase M24B family. Bacterial-type prolidase subfamily. It depends on Mn(2+) as a cofactor.

The catalysed reaction is Xaa-L-Pro dipeptide + H2O = an L-alpha-amino acid + L-proline. Functionally, splits dipeptides with a prolyl residue in the C-terminal position. In Enterobacter sp. (strain 638), this protein is Xaa-Pro dipeptidase.